Here is a 237-residue protein sequence, read N- to C-terminus: Phosphoribosylaminoimidazole-succinocarboxamide synthase (237 aa).

Belongs to the SAICAR synthetase family.

It carries out the reaction 5-amino-1-(5-phospho-D-ribosyl)imidazole-4-carboxylate + L-aspartate + ATP = (2S)-2-[5-amino-1-(5-phospho-beta-D-ribosyl)imidazole-4-carboxamido]succinate + ADP + phosphate + 2 H(+). It functions in the pathway purine metabolism; IMP biosynthesis via de novo pathway; 5-amino-1-(5-phospho-D-ribosyl)imidazole-4-carboxamide from 5-amino-1-(5-phospho-D-ribosyl)imidazole-4-carboxylate: step 1/2. The chain is Phosphoribosylaminoimidazole-succinocarboxamide synthase from Listeria welshimeri serovar 6b (strain ATCC 35897 / DSM 20650 / CCUG 15529 / CIP 8149 / NCTC 11857 / SLCC 5334 / V8).